Consider the following 310-residue polypeptide: Ribosomal RNA small subunit methyltransferase H (310 aa).

S-adenosyl-L-methionine-binding positions include Gly33 to His35, Asp52, Phe79, Asp98, and Gln105.

It belongs to the methyltransferase superfamily. RsmH family.

It localises to the cytoplasm. The catalysed reaction is cytidine(1402) in 16S rRNA + S-adenosyl-L-methionine = N(4)-methylcytidine(1402) in 16S rRNA + S-adenosyl-L-homocysteine + H(+). In terms of biological role, specifically methylates the N4 position of cytidine in position 1402 (C1402) of 16S rRNA. The protein is Ribosomal RNA small subunit methyltransferase H of Campylobacter jejuni subsp. jejuni serotype O:23/36 (strain 81-176).